A 211-amino-acid polypeptide reads, in one-letter code: LexA repressor (211 aa).

A DNA-binding region (H-T-H motif) is located at residues arginine 30–lysine 50. Active-site for autocatalytic cleavage activity residues include serine 128 and lysine 165.

The protein belongs to the peptidase S24 family. Homodimer.

It carries out the reaction Hydrolysis of Ala-|-Gly bond in repressor LexA.. Its function is as follows. Represses a number of genes involved in the response to DNA damage (SOS response), including recA and lexA. In the presence of single-stranded DNA, RecA interacts with LexA causing an autocatalytic cleavage which disrupts the DNA-binding part of LexA, leading to derepression of the SOS regulon and eventually DNA repair. The polypeptide is LexA repressor (Haemophilus ducreyi (strain 35000HP / ATCC 700724)).